A 994-amino-acid polypeptide reads, in one-letter code: Probable beta-galactosidase C (994 aa).

Positions 1–19 (MKLQSILSCWAILVAQIWA) are cleaved as a signal peptide. Y78 serves as a coordination point for substrate. The N-linked (GlcNAc...) asparagine glycan is linked to N88. N123, A124, E125, and N183 together coordinate substrate. The active-site Proton donor is E184. Y247 provides a ligand contact to substrate. C253 and C301 form a disulfide bridge. Residue N272 is glycosylated (N-linked (GlcNAc...) asparagine). Residue E283 is the Nucleophile of the active site. Y350 contacts substrate. Residues N388, N407, N433, N500, N514, N521, N584, N600, N674, N712, N717, N757, N861, and N969 are each glycosylated (N-linked (GlcNAc...) asparagine).

Belongs to the glycosyl hydrolase 35 family.

The protein localises to the secreted. The catalysed reaction is Hydrolysis of terminal non-reducing beta-D-galactose residues in beta-D-galactosides.. Functionally, cleaves beta-linked terminal galactosyl residues from gangliosides, glycoproteins, and glycosaminoglycans. The polypeptide is Probable beta-galactosidase C (lacC) (Aspergillus niger (strain ATCC MYA-4892 / CBS 513.88 / FGSC A1513)).